Consider the following 578-residue polypeptide: Triokinase/FMN cyclase (578 aa).

In terms of domain architecture, DhaK spans 9–336; that stretch reads SVAGCADDAL…IDAETTASAW (328 aa). Residues 56–59, Lys109, and Asp114 contribute to the dihydroxyacetone site; that span reads GSGH. The Tele-hemiaminal-histidine intermediate role is filled by His221. Phosphoserine is present on Ser350. Positions 372–571 constitute a DhaL domain; it reads KQMVLVLEWV…AAAILRAILE (200 aa). ATP-binding positions include 401 to 404, 446 to 447, Gly486, and 494 to 495; these read DGDC, SS, and TM. Phosphoserine occurs at positions 511 and 545. ATP is bound at residue 556–558; the sequence is DPG.

As to quaternary structure, homodimer. Interacts with IFIH1 (via the CARD domains), the interaction is inhibited by viral infection. Mg(2+) serves as cofactor. Mn(2+) is required as a cofactor. It depends on Co(2+) as a cofactor.

It carries out the reaction dihydroxyacetone + ATP = dihydroxyacetone phosphate + ADP + H(+). The catalysed reaction is D-glyceraldehyde + ATP = D-glyceraldehyde 3-phosphate + ADP + H(+). The enzyme catalyses FAD = riboflavin cyclic-4',5'-phosphate + AMP + H(+). With respect to regulation, each activity is inhibited by the substrate(s) of the other. Functionally, catalyzes both the phosphorylation of dihydroxyacetone and of glyceraldehyde, and the splitting of ribonucleoside diphosphate-X compounds among which FAD is the best substrate. Represses IFIH1-mediated cellular antiviral response. This Bos taurus (Bovine) protein is Triokinase/FMN cyclase (TKFC).